Reading from the N-terminus, the 109-residue chain is Cell division protein ZapA (109 aa).

Residues Pro-21–Gln-97 are a coiled coil.

It belongs to the ZapA family. Type 1 subfamily. Homodimer. Interacts with FtsZ.

The protein localises to the cytoplasm. In terms of biological role, activator of cell division through the inhibition of FtsZ GTPase activity, therefore promoting FtsZ assembly into bundles of protofilaments necessary for the formation of the division Z ring. It is recruited early at mid-cell but it is not essential for cell division. This Salmonella agona (strain SL483) protein is Cell division protein ZapA.